A 141-amino-acid polypeptide reads, in one-letter code: Hemoglobin subunit alpha (141 aa).

The region spanning Val-1–Arg-141 is the Globin domain. Ser-3 is modified (phosphoserine). An N6-succinyllysine modification is found at Lys-7. Thr-8 is modified (phosphothreonine). Position 11 is an N6-succinyllysine (Lys-11). The residue at position 16 (Lys-16) is an N6-acetyllysine; alternate. An N6-succinyllysine; alternate modification is found at Lys-16. The residue at position 24 (Tyr-24) is a Phosphotyrosine. Phosphoserine is present on Ser-35. An N6-succinyllysine modification is found at Lys-40. Ser-49 carries the phosphoserine modification. His-58 is an O2 binding site. Residue His-87 coordinates heme b. Ser-102 is modified (phosphoserine). Thr-108 carries the phosphothreonine modification. Ser-124 carries the post-translational modification Phosphoserine. Phosphothreonine is present on residues Thr-134 and Thr-137. Position 138 is a phosphoserine (Ser-138).

It belongs to the globin family. In terms of assembly, heterotetramer of two alpha chains and two beta chains. As to expression, red blood cells.

Involved in oxygen transport from the lung to the various peripheral tissues. Functionally, hemopressin acts as an antagonist peptide of the cannabinoid receptor CNR1. Hemopressin-binding efficiently blocks cannabinoid receptor CNR1 and subsequent signaling. The polypeptide is Hemoglobin subunit alpha (HBA) (Lutra lutra (European river otter)).